The primary structure comprises 210 residues: Thiamine-phosphate synthase (210 aa).

4-amino-2-methyl-5-(diphosphooxymethyl)pyrimidine is bound by residues 38–42 (QLREK) and Asn-70. Mg(2+) contacts are provided by Asp-71 and Asp-90. Ser-109 serves as a coordination point for 4-amino-2-methyl-5-(diphosphooxymethyl)pyrimidine. 139–141 (TPT) lines the 2-[(2R,5Z)-2-carboxy-4-methylthiazol-5(2H)-ylidene]ethyl phosphate pocket. Lys-142 contacts 4-amino-2-methyl-5-(diphosphooxymethyl)pyrimidine. 2-[(2R,5Z)-2-carboxy-4-methylthiazol-5(2H)-ylidene]ethyl phosphate contacts are provided by residues Gly-170 and 190–191 (VS).

The protein belongs to the thiamine-phosphate synthase family. It depends on Mg(2+) as a cofactor.

The catalysed reaction is 2-[(2R,5Z)-2-carboxy-4-methylthiazol-5(2H)-ylidene]ethyl phosphate + 4-amino-2-methyl-5-(diphosphooxymethyl)pyrimidine + 2 H(+) = thiamine phosphate + CO2 + diphosphate. It catalyses the reaction 2-(2-carboxy-4-methylthiazol-5-yl)ethyl phosphate + 4-amino-2-methyl-5-(diphosphooxymethyl)pyrimidine + 2 H(+) = thiamine phosphate + CO2 + diphosphate. It carries out the reaction 4-methyl-5-(2-phosphooxyethyl)-thiazole + 4-amino-2-methyl-5-(diphosphooxymethyl)pyrimidine + H(+) = thiamine phosphate + diphosphate. It functions in the pathway cofactor biosynthesis; thiamine diphosphate biosynthesis; thiamine phosphate from 4-amino-2-methyl-5-diphosphomethylpyrimidine and 4-methyl-5-(2-phosphoethyl)-thiazole: step 1/1. Condenses 4-methyl-5-(beta-hydroxyethyl)thiazole monophosphate (THZ-P) and 2-methyl-4-amino-5-hydroxymethyl pyrimidine pyrophosphate (HMP-PP) to form thiamine monophosphate (TMP). This Leptospira biflexa serovar Patoc (strain Patoc 1 / Ames) protein is Thiamine-phosphate synthase.